The primary structure comprises 164 residues: Phosphopantetheine adenylyltransferase (164 aa).

Thr10 is a binding site for substrate. ATP-binding positions include 10 to 11 (TF) and His18. Residues Lys42, Leu74, and Arg88 each contribute to the substrate site. Residues 89–91 (GIR), Glu99, and 124–130 (NSFISST) contribute to the ATP site.

This sequence belongs to the bacterial CoaD family. In terms of assembly, homohexamer. Requires Mg(2+) as cofactor.

The protein localises to the cytoplasm. The catalysed reaction is (R)-4'-phosphopantetheine + ATP + H(+) = 3'-dephospho-CoA + diphosphate. It functions in the pathway cofactor biosynthesis; coenzyme A biosynthesis; CoA from (R)-pantothenate: step 4/5. Its function is as follows. Reversibly transfers an adenylyl group from ATP to 4'-phosphopantetheine, yielding dephospho-CoA (dPCoA) and pyrophosphate. In Pseudoalteromonas translucida (strain TAC 125), this protein is Phosphopantetheine adenylyltransferase.